A 553-amino-acid polypeptide reads, in one-letter code: Arginine--tRNA ligase (553 aa).

A 'HIGH' region motif is present at residues 130 to 140 (ANPTGDLHIGH).

Belongs to the class-I aminoacyl-tRNA synthetase family. Monomer.

It is found in the cytoplasm. It catalyses the reaction tRNA(Arg) + L-arginine + ATP = L-arginyl-tRNA(Arg) + AMP + diphosphate. The chain is Arginine--tRNA ligase from Staphylococcus epidermidis (strain ATCC 12228 / FDA PCI 1200).